The primary structure comprises 271 residues: Tryptophan synthase alpha chain (271 aa).

Active-site proton acceptor residues include Glu49 and Asp60.

The protein belongs to the TrpA family. As to quaternary structure, tetramer of two alpha and two beta chains.

It catalyses the reaction (1S,2R)-1-C-(indol-3-yl)glycerol 3-phosphate + L-serine = D-glyceraldehyde 3-phosphate + L-tryptophan + H2O. Its pathway is amino-acid biosynthesis; L-tryptophan biosynthesis; L-tryptophan from chorismate: step 5/5. Its function is as follows. The alpha subunit is responsible for the aldol cleavage of indoleglycerol phosphate to indole and glyceraldehyde 3-phosphate. The polypeptide is Tryptophan synthase alpha chain (Rhizorhabdus wittichii (strain DSM 6014 / CCUG 31198 / JCM 15750 / NBRC 105917 / EY 4224 / RW1) (Sphingomonas wittichii)).